A 401-amino-acid polypeptide reads, in one-letter code: Dual-specificity RNA methyltransferase RlmN (401 aa).

The active-site Proton acceptor is Glu-114. A Radical SAM core domain is found at Asp-120–Asp-365. Cys-127 and Cys-370 form a disulfide bridge. The [4Fe-4S] cluster site is built by Cys-134, Cys-138, and Cys-141. S-adenosyl-L-methionine-binding positions include Gly-187–Glu-188, Ser-219, Ser-241–His-243, and Asn-327. Cys-370 functions as the S-methylcysteine intermediate in the catalytic mechanism.

It belongs to the radical SAM superfamily. RlmN family. Requires [4Fe-4S] cluster as cofactor.

It is found in the cytoplasm. It catalyses the reaction adenosine(2503) in 23S rRNA + 2 reduced [2Fe-2S]-[ferredoxin] + 2 S-adenosyl-L-methionine = 2-methyladenosine(2503) in 23S rRNA + 5'-deoxyadenosine + L-methionine + 2 oxidized [2Fe-2S]-[ferredoxin] + S-adenosyl-L-homocysteine. The catalysed reaction is adenosine(37) in tRNA + 2 reduced [2Fe-2S]-[ferredoxin] + 2 S-adenosyl-L-methionine = 2-methyladenosine(37) in tRNA + 5'-deoxyadenosine + L-methionine + 2 oxidized [2Fe-2S]-[ferredoxin] + S-adenosyl-L-homocysteine. In terms of biological role, specifically methylates position 2 of adenine 2503 in 23S rRNA and position 2 of adenine 37 in tRNAs. m2A2503 modification seems to play a crucial role in the proofreading step occurring at the peptidyl transferase center and thus would serve to optimize ribosomal fidelity. The chain is Dual-specificity RNA methyltransferase RlmN from Stenotrophomonas maltophilia (strain R551-3).